Consider the following 631-residue polypeptide: Glutamyl-tRNA(Gln) amidotransferase subunit E (631 aa).

The protein belongs to the GatB/GatE family. GatE subfamily. In terms of assembly, heterodimer of GatD and GatE.

It carries out the reaction L-glutamyl-tRNA(Gln) + L-glutamine + ATP + H2O = L-glutaminyl-tRNA(Gln) + L-glutamate + ADP + phosphate + H(+). Its function is as follows. Allows the formation of correctly charged Gln-tRNA(Gln) through the transamidation of misacylated Glu-tRNA(Gln) in organisms which lack glutaminyl-tRNA synthetase. The reaction takes place in the presence of glutamine and ATP through an activated gamma-phospho-Glu-tRNA(Gln). The GatDE system is specific for glutamate and does not act on aspartate. The sequence is that of Glutamyl-tRNA(Gln) amidotransferase subunit E from Methanococcus maripaludis (strain DSM 14266 / JCM 13030 / NBRC 101832 / S2 / LL).